Consider the following 35-residue polypeptide: U2-agatoxin-Aop1a (35 aa).

Cystine bridges form between Cys-3–Cys-19, Cys-10–Cys-24, and Cys-18–Cys-34. Leu-35 is subject to Leucine amide.

Belongs to the neurotoxin 01 (U2-agtx) family. Expressed by the venom gland.

Its subcellular location is the secreted. Insect-selective toxin causing rapid but reversible paralysis in crickets. Suppresses the excitatory postsynaptic potentials evoked in lobster neuromuscular synaptic preparations, possibly by blocking the presynaptic calcium channel (Cav). Induces instantaneous reversible paralysis when injected into crickets. The polypeptide is U2-agatoxin-Aop1a (Allagelena opulenta (Funnel weaving spider)).